Reading from the N-terminus, the 207-residue chain is Ribosomal RNA small subunit methyltransferase G (207 aa).

S-adenosyl-L-methionine-binding positions include glycine 76, glutamine 81, 127-128 (VE), and arginine 141.

This sequence belongs to the methyltransferase superfamily. RNA methyltransferase RsmG family.

It is found in the cytoplasm. The catalysed reaction is guanosine(527) in 16S rRNA + S-adenosyl-L-methionine = N(7)-methylguanosine(527) in 16S rRNA + S-adenosyl-L-homocysteine. Its function is as follows. Specifically methylates the N7 position of guanine in position 527 of 16S rRNA. The sequence is that of Ribosomal RNA small subunit methyltransferase G from Neisseria gonorrhoeae (strain ATCC 700825 / FA 1090).